The chain runs to 501 residues: MAINAQEISALIKQQIENFKPNFDVTETGVVTYIGDGIARAHGLENVMSGELLNFENGSYGMAQNLESTDVGIIILGDFTDIREGDTIRRTGKIMEVPVGESLIGRVVDPLGRPVDGLGEIHTDKTRPVEAPAPGVMQRKSVSEPLQTGLKAIDALVPIGRGQRELIIGDRQTGKTTIAIDTILNQKDQDMICIYVAIGQKESTVRTQVETLRQYGALDYTIVVTASASQPSPLLFLAPYAGVAMAEEFMYQGKHVLIVYDDLSKQAVAYRELSLLLRRPPGREAFPGDVFYLHSRLLERSAKVSDELGGGSITALPFIETQAGDISAYIATNVISITDGQIFLGDGLFNAGIRPAIDAGSSVSRVGGSAQIKAMKKVAGTLRIDLASYRELEAFTKFGSDLDAATQAKLNRGRRTVEVLKQPVHKPLPVEKQVTILYALTHGFLDTVPVDDIVRFEEEFHAFFDAQHPEILETIRDTKDLPEEAVLDAAITEFLNQSSFQ.

169-176 (GDRQTGKT) contributes to the ATP binding site.

This sequence belongs to the ATPase alpha/beta chains family. F-type ATPases have 2 components, CF(1) - the catalytic core - and CF(0) - the membrane proton channel. CF(1) has five subunits: alpha(3), beta(3), gamma(1), delta(1), epsilon(1). CF(0) has three main subunits: a(1), b(2) and c(9-12). The alpha and beta chains form an alternating ring which encloses part of the gamma chain. CF(1) is attached to CF(0) by a central stalk formed by the gamma and epsilon chains, while a peripheral stalk is formed by the delta and b chains.

The protein resides in the cell membrane. The enzyme catalyses ATP + H2O + 4 H(+)(in) = ADP + phosphate + 5 H(+)(out). Produces ATP from ADP in the presence of a proton gradient across the membrane. The alpha chain is a regulatory subunit. The polypeptide is ATP synthase subunit alpha (Streptococcus pneumoniae serotype 4 (strain ATCC BAA-334 / TIGR4)).